The following is a 313-amino-acid chain: Ribosomal RNA small subunit methyltransferase H (313 aa).

S-adenosyl-L-methionine-binding positions include 35 to 37 (GGH), Asp55, Phe80, Asp102, and Gln109.

It belongs to the methyltransferase superfamily. RsmH family.

The protein resides in the cytoplasm. The enzyme catalyses cytidine(1402) in 16S rRNA + S-adenosyl-L-methionine = N(4)-methylcytidine(1402) in 16S rRNA + S-adenosyl-L-homocysteine + H(+). Functionally, specifically methylates the N4 position of cytidine in position 1402 (C1402) of 16S rRNA. The sequence is that of Ribosomal RNA small subunit methyltransferase H from Shewanella denitrificans (strain OS217 / ATCC BAA-1090 / DSM 15013).